A 902-amino-acid chain; its full sequence is Protein translocase subunit SecA (902 aa).

ATP-binding positions include Gln87, 105–109 (GEGKT), and Asp512. Residues 850 to 902 (RLAKQQQLSHEVTKESQMSAVDGQVASGKKVGRNEPCPCGSGKKYKHCHGKLG) are disordered. The span at 853–868 (KQQQLSHEVTKESQMS) shows a compositional bias: polar residues. 4 residues coordinate Zn(2+): Cys886, Cys888, Cys897, and His898. Over residues 892-902 (KKYKHCHGKLG) the composition is skewed to basic residues.

It belongs to the SecA family. Monomer and homodimer. Part of the essential Sec protein translocation apparatus which comprises SecA, SecYEG and auxiliary proteins SecDF-YajC and YidC. Zn(2+) is required as a cofactor.

It is found in the cell inner membrane. The protein localises to the cytoplasm. It carries out the reaction ATP + H2O + cellular proteinSide 1 = ADP + phosphate + cellular proteinSide 2.. Part of the Sec protein translocase complex. Interacts with the SecYEG preprotein conducting channel. Has a central role in coupling the hydrolysis of ATP to the transfer of proteins into and across the cell membrane, serving both as a receptor for the preprotein-SecB complex and as an ATP-driven molecular motor driving the stepwise translocation of polypeptide chains across the membrane. In Proteus mirabilis (strain HI4320), this protein is Protein translocase subunit SecA.